Consider the following 307-residue polypeptide: Peroxisomal membrane protein PMP34 (307 aa).

Over 1 to 9 the chain is Cytoplasmic; the sequence is MASVLSYES. The necessary for targeting to peroxisomes and interaction with PEX19 stretch occupies residues 1–147; sequence MASVLSYESL…NEDIIPTNYK (147 aa). 3 Solcar repeats span residues 7-92, 99-192, and 200-294; these read YESL…LKAV, SSTG…LKRQ, and LSSL…LTAA. A helical transmembrane segment spans residues 10–30; that stretch reads LVHAVAGAVGSVTAMTVFFPL. Residues 31 to 66 are Lumenal-facing; sequence DTARLRLQVDEKRKSKTTHAVLLEIIKEEGLLAPYR. A helical membrane pass occupies residues 67–87; that stretch reads GWFPVISSLCCSNFVYFYTFN. Residues 88–104 lie on the Cytoplasmic side of the membrane; the sequence is SLKAVWVKGQRSSTGKD. The helical transmembrane segment at 105–125 threads the bilayer; that stretch reads LVVGFVAGVVNVLLTTPLWVV. The Lumenal portion of the chain corresponds to 126–160; the sequence is NTRLKLQGAKFRNEDIIPTNYKGIIDAFHQIIRDE. The chain crosses the membrane as a helical span at residues 161 to 181; the sequence is GILALWNGTFPSLLLVFNPAI. Topologically, residues 182–202 are cytoplasmic; the sequence is QFMFYEGLKRQLLKKRMKLSS. The Peroxisome localization signal motif lies at 190 to 199; that stretch reads KRQLLKKRMK. The chain crosses the membrane as a helical span at residues 203 to 223; it reads LDVFIIGAIAKAIATTVTYPM. Residues 224–280 are Lumenal-facing; it reads QTVQSILRFGRHRLNPENRTLGSLRNVLSLLHQRVKRFGIMGLYKGLEAKLLQTVLT. Residues 244 to 307 form a necessary for targeting to peroxisomes and interaction with PEX19 region; sequence LGSLRNVLSL…VMGLKSTHKH (64 aa). A helical transmembrane segment spans residues 281-301; that stretch reads AALMFLVYEKLTAATFTVMGL. Residues 302 to 307 are Cytoplasmic-facing; the sequence is KSTHKH.

This sequence belongs to the mitochondrial carrier (TC 2.A.29) family. Interacts (via N- and C-terminus peroxisomal targeting regions) with PEX19; the interaction occurs with the newly synthesized SLC25A17 in the cytosol. As to expression, expressed in liver, kidney, heart, spleen, muscle and lung.

It localises to the cytoplasm. The protein resides in the peroxisome membrane. The catalysed reaction is AMP(out) + CoA(in) = AMP(in) + CoA(out). It carries out the reaction 3'-dephospho-CoA(in) + AMP(out) = 3'-dephospho-CoA(out) + AMP(in). It catalyses the reaction acetyl-CoA(in) + AMP(out) = acetyl-CoA(out) + AMP(in). The enzyme catalyses AMP(in) + NAD(+)(out) = AMP(out) + NAD(+)(in). The catalysed reaction is FAD(in) + AMP(out) = FAD(out) + AMP(in). It carries out the reaction FMN(in) + AMP(out) = FMN(out) + AMP(in). It catalyses the reaction AMP(in) + ADP(out) = AMP(out) + ADP(in). The enzyme catalyses adenosine 3',5'-bisphosphate(in) + AMP(out) = adenosine 3',5'-bisphosphate(out) + AMP(in). The catalysed reaction is FAD(in) + CoA(out) = FAD(out) + CoA(in). It carries out the reaction FAD(in) + adenosine 3',5'-bisphosphate(out) = FAD(out) + adenosine 3',5'-bisphosphate(in). It catalyses the reaction FMN(in) + CoA(out) = FMN(out) + CoA(in). The enzyme catalyses FMN(in) + adenosine 3',5'-bisphosphate(out) = FMN(out) + adenosine 3',5'-bisphosphate(in). The catalysed reaction is FAD(out) + NAD(+)(in) = FAD(in) + NAD(+)(out). It carries out the reaction FMN(out) + NAD(+)(in) = FMN(in) + NAD(+)(out). It catalyses the reaction NAD(+)(in) + CoA(out) = NAD(+)(out) + CoA(in). The enzyme catalyses adenosine 3',5'-bisphosphate(out) + NAD(+)(in) = adenosine 3',5'-bisphosphate(in) + NAD(+)(out). The catalysed reaction is FMN(out) + ADP(in) = FMN(in) + ADP(out). It carries out the reaction FAD(out) + ADP(in) = FAD(in) + ADP(out). It catalyses the reaction ADP(out) + CoA(in) = ADP(in) + CoA(out). The enzyme catalyses adenosine 3',5'-bisphosphate(in) + ADP(out) = adenosine 3',5'-bisphosphate(out) + ADP(in). Peroxisomal transporter for multiple cofactors like coenzyme A (CoA), flavin adenine dinucleotide (FAD), flavin mononucleotide (FMN) and nucleotide adenosine monophosphate (AMP), and to a lesser extent for nicotinamide adenine dinucleotide (NAD(+)), adenosine diphosphate (ADP) and adenosine 3',5'-diphosphate (PAP). May catalyze the transport of free CoA, FAD and NAD(+) from the cytosol into the peroxisomal matrix by a counter-exchange mechanism. This is Peroxisomal membrane protein PMP34 (Slc25a17) from Mus musculus (Mouse).